The primary structure comprises 354 residues: Uroporphyrinogen decarboxylase (354 aa).

Substrate contacts are provided by residues 27 to 31, Asp-77, Tyr-154, Thr-209, and His-327; that span reads RQAGR.

The protein belongs to the uroporphyrinogen decarboxylase family. In terms of assembly, homodimer.

The protein localises to the cytoplasm. It catalyses the reaction uroporphyrinogen III + 4 H(+) = coproporphyrinogen III + 4 CO2. The protein operates within porphyrin-containing compound metabolism; protoporphyrin-IX biosynthesis; coproporphyrinogen-III from 5-aminolevulinate: step 4/4. Functionally, catalyzes the decarboxylation of four acetate groups of uroporphyrinogen-III to yield coproporphyrinogen-III. The chain is Uroporphyrinogen decarboxylase from Edwardsiella ictaluri (strain 93-146).